We begin with the raw amino-acid sequence, 294 residues long: Gap junction delta-3 protein (294 aa).

Over 1–24 (MGEWAFLGSLLDAVQLQSPLVGRL) the chain is Cytoplasmic. Residues 25-45 (WLVVMLIFRILVLATVGGAVF) traverse the membrane as a helical segment. The Extracellular portion of the chain corresponds to 46–76 (EDEQEEFVCNTLQPGCRQTCYDRAFPVSHYR). Residues 77-97 (FWLFHILLLSAPPVLFVVYSM) form a helical membrane-spanning segment. The Cytoplasmic portion of the chain corresponds to 98 to 136 (HRAGKEAGGAEAAAQCAPGLPEAQCAPCALRARRARRCY). A helical membrane pass occupies residues 137-157 (LLSVALRLLAELTFLGGQALL). Residues 158–188 (YGFRVAPHFACAGPPCPHTVDCFVSRPTEKT) lie on the Extracellular side of the membrane. The chain crosses the membrane as a helical span at residues 189 to 209 (VFVLFYFAVGLLSALLSVAEL). Topologically, residues 210-294 (GHLLWKGRPR…PATGRRDLAI (85 aa)) are cytoplasmic. Residues 233–294 (EAQKLLPPPP…PATGRRDLAI (62 aa)) are disordered. A compositionally biased stretch (pro residues) spans 238–250 (LPPPPPPPPPPAL).

Belongs to the connexin family. Delta-type subfamily. As to quaternary structure, a connexon is composed of a hexamer of connexins. Interacts with TJP1. In terms of tissue distribution, expressed in vascular smooth muscle cells. Found in heart, colon, and artery (at protein level). Found in cerebral cortex, heart, liver, lung, kidney, spleen and testis.

The protein resides in the cell membrane. Its subcellular location is the cell junction. It is found in the gap junction. Its function is as follows. One gap junction consists of a cluster of closely packed pairs of transmembrane channels, the connexons, through which materials of low MW diffuse from one cell to a neighboring cell. This chain is Gap junction delta-3 protein (GJD3), found in Homo sapiens (Human).